The chain runs to 452 residues: Phosphoglucosamine mutase (452 aa).

S97 serves as the catalytic Phosphoserine intermediate. Positions 97, 236, 238, and 240 each coordinate Mg(2+). S97 is modified (phosphoserine).

Belongs to the phosphohexose mutase family. Requires Mg(2+) as cofactor. Post-translationally, activated by phosphorylation.

It catalyses the reaction alpha-D-glucosamine 1-phosphate = D-glucosamine 6-phosphate. In terms of biological role, catalyzes the conversion of glucosamine-6-phosphate to glucosamine-1-phosphate. This chain is Phosphoglucosamine mutase, found in Prochlorococcus marinus subsp. pastoris (strain CCMP1986 / NIES-2087 / MED4).